Here is a 503-residue protein sequence, read N- to C-terminus: Maturase K (503 aa).

It belongs to the intron maturase 2 family. MatK subfamily.

The protein localises to the plastid. The protein resides in the chloroplast. Functionally, usually encoded in the trnK tRNA gene intron. Probably assists in splicing its own and other chloroplast group II introns. This chain is Maturase K, found in Syzygium australe (Brush cherry).